Reading from the N-terminus, the 161-residue chain is Protein PLASTID TRANSCRIPTIONALLY ACTIVE 7 (161 aa).

The transit peptide at 1 to 32 directs the protein to the chloroplast; that stretch reads MASFTCSSPSSILPIIDTRSGNLRCTFQSQVS.

Component of the transcriptionally active chromosome (TAC) complexes. Interacts with FLN1, PTAC10, PTAC12/HMR/PAP5 and PTAC14. Binds to SL1/MTERF3. As to expression, mostly expressed in leaves, flowers and seedlings, and, to a lower extent, in roots and stems.

It localises to the plastid. The protein resides in the chloroplast. Essential for chloroplast development, especially for thylakoid formation. Involved in plastid gene expression, probably by maintaining plastid-encoded RNA polymerase (PEP) activity. This is Protein PLASTID TRANSCRIPTIONALLY ACTIVE 7 from Arabidopsis thaliana (Mouse-ear cress).